A 614-amino-acid chain; its full sequence is UvrABC system protein C (614 aa).

The GIY-YIG domain occupies 19 to 97 (SLPGCYLWKN…IKKYNPKFNV (79 aa)). The UVR domain occupies 208–243 (ERLVADLKKAMMDASSKMEYERAGFLKQRIEKINQL).

This sequence belongs to the UvrC family. In terms of assembly, interacts with UvrB in an incision complex.

The protein resides in the cytoplasm. Functionally, the UvrABC repair system catalyzes the recognition and processing of DNA lesions. UvrC both incises the 5' and 3' sides of the lesion. The N-terminal half is responsible for the 3' incision and the C-terminal half is responsible for the 5' incision. This Leptospira biflexa serovar Patoc (strain Patoc 1 / Ames) protein is UvrABC system protein C.